The primary structure comprises 65 residues: Large ribosomal subunit protein bL35 (65 aa).

The protein belongs to the bacterial ribosomal protein bL35 family.

In Proteus mirabilis (strain HI4320), this protein is Large ribosomal subunit protein bL35.